Here is a 357-residue protein sequence, read N- to C-terminus: Probable leucine aminopeptidase ARB_00576 (357 aa).

The first 15 residues, 1-15 (MKVLAALALSALAMA), serve as a signal peptide directing secretion. N76 carries N-linked (GlcNAc...) asparagine glycosylation. Residues H167 and D185 each contribute to the Zn(2+) site. The segment at 169-188 (DSINGNNPQGEAPGADDNGS) is disordered. The N-linked (GlcNAc...) asparagine glycan is linked to N186. 2 residues coordinate Zn(2+): E224 and D251. A glycan (N-linked (GlcNAc...) asparagine) is linked at N269. A disulfide bridge links C291 with C295. H324 provides a ligand contact to Zn(2+).

This sequence belongs to the peptidase M28 family. M28E subfamily. Monomer. Requires Zn(2+) as cofactor.

The protein resides in the secreted. Its function is as follows. Probable extracellular aminopeptidase which contributes to pathogenicity. The protein is Probable leucine aminopeptidase ARB_00576 of Arthroderma benhamiae (strain ATCC MYA-4681 / CBS 112371) (Trichophyton mentagrophytes).